The primary structure comprises 77 residues: DNA-directed RNA polymerase subunit omega (77 aa).

The protein belongs to the RNA polymerase subunit omega family. In terms of assembly, in cyanobacteria the RNAP catalytic core is composed of 2 alpha, 1 beta, 1 beta', 1 gamma and 1 omega subunit. When a sigma factor is associated with the core the holoenzyme is formed, which can initiate transcription.

It carries out the reaction RNA(n) + a ribonucleoside 5'-triphosphate = RNA(n+1) + diphosphate. In terms of biological role, promotes RNA polymerase assembly. Latches the N- and C-terminal regions of the beta' subunit thereby facilitating its interaction with the beta and alpha subunits. This Thermosynechococcus vestitus (strain NIES-2133 / IAM M-273 / BP-1) protein is DNA-directed RNA polymerase subunit omega.